A 718-amino-acid polypeptide reads, in one-letter code: Polyribonucleotide nucleotidyltransferase (718 aa).

Mg(2+)-binding residues include aspartate 497 and aspartate 503. One can recognise a KH domain in the interval proline 564–isoleucine 623. The region spanning glycine 633–leucine 701 is the S1 motif domain.

Belongs to the polyribonucleotide nucleotidyltransferase family. Mg(2+) is required as a cofactor.

It is found in the cytoplasm. It catalyses the reaction RNA(n+1) + phosphate = RNA(n) + a ribonucleoside 5'-diphosphate. Its function is as follows. Involved in mRNA degradation. Catalyzes the phosphorolysis of single-stranded polyribonucleotides processively in the 3'- to 5'-direction. The protein is Polyribonucleotide nucleotidyltransferase of Gloeothece citriformis (strain PCC 7424) (Cyanothece sp. (strain PCC 7424)).